A 517-amino-acid polypeptide reads, in one-letter code: T-complex protein 11-like protein 2 (517 aa).

The tract at residues 1 to 59 (MPFNGEKQYVNEDQQSDSESSRFSESTASLSDYGCSRQSFTSDSSSKSSSPASTSPPRG) is disordered. Ser-16 is subject to Phosphoserine. Positions 17-55 (DSESSRFSESTASLSDYGCSRQSFTSDSSSKSSSPASTS) are enriched in low complexity.

It belongs to the TCP11 family. As to quaternary structure, interacts with FMNL2; this interaction promotes muscle-derived satellite cell (MDSC) migration and differentiation.

Its subcellular location is the cytoplasm. It localises to the cytoskeleton. Promotes the migration of muscle-derived satellite cells (MDSCs) during differentiation throught interaction with FMNL2 and therefore may participate in microfilament assembly. The protein is T-complex protein 11-like protein 2 of Rattus norvegicus (Rat).